We begin with the raw amino-acid sequence, 912 residues long: Translation initiation factor IF-2 (912 aa).

Residues 26–297 (SDQGEFVKSA…RGRKSKRAKR (272 aa)) form a disordered region. Residues 56-74 (KPAPAASNGAAAEAAAPPK) show a composition bias toward low complexity. The segment covering 100-120 (APEPPAAPAAPAAPAPKPSPA) has biased composition (pro residues). Positions 121-131 (ARPAAAEAAAP) are enriched in low complexity. 3 stretches are compositionally biased toward pro residues: residues 132 to 152 (APAP…PGAP), 173 to 183 (PRPQAPRPGAP), and 192 to 218 (NMPP…PGGG). Over residues 219 to 283 (PRPGGAGRPG…GAAGAFGRPG (65 aa)) the composition is skewed to gly residues. Positions 287–296 (KRGRKSKRAK) are enriched in basic residues. In terms of domain architecture, tr-type G spans 408 to 579 (TRPPVVTVMG…AVLLTADAAL (172 aa)). The G1 stretch occupies residues 417-424 (GHVDHGKT). GTP is bound at residue 417–424 (GHVDHGKT). Residues 442 to 446 (GITQH) form a G2 region. The segment at 467–470 (DTPG) is G3. GTP contacts are provided by residues 467-471 (DTPGH) and 521-524 (NKID). Residues 521–524 (NKID) form a G4 region. Residues 557–559 (SAR) are G5.

The protein belongs to the TRAFAC class translation factor GTPase superfamily. Classic translation factor GTPase family. IF-2 subfamily.

The protein localises to the cytoplasm. In terms of biological role, one of the essential components for the initiation of protein synthesis. Protects formylmethionyl-tRNA from spontaneous hydrolysis and promotes its binding to the 30S ribosomal subunits. Also involved in the hydrolysis of GTP during the formation of the 70S ribosomal complex. The polypeptide is Translation initiation factor IF-2 (Mycobacteroides abscessus (strain ATCC 19977 / DSM 44196 / CCUG 20993 / CIP 104536 / JCM 13569 / NCTC 13031 / TMC 1543 / L948) (Mycobacterium abscessus)).